Reading from the N-terminus, the 475-residue chain is Bifunctional protein HldE (475 aa).

The tract at residues 1–321 is ribokinase; it reads MADKIDISLY…RALHQITASH (321 aa). ATP is bound at residue 197–200; it reads NLKE. D266 is an active-site residue. Positions 346 to 475 are cytidylyltransferase; the sequence is MTNGCFDILH…TSRLVEKMLN (130 aa).

The protein in the N-terminal section; belongs to the carbohydrate kinase PfkB family. This sequence in the C-terminal section; belongs to the cytidylyltransferase family. In terms of assembly, homodimer.

It catalyses the reaction D-glycero-beta-D-manno-heptose 7-phosphate + ATP = D-glycero-beta-D-manno-heptose 1,7-bisphosphate + ADP + H(+). The enzyme catalyses D-glycero-beta-D-manno-heptose 1-phosphate + ATP + H(+) = ADP-D-glycero-beta-D-manno-heptose + diphosphate. Its pathway is nucleotide-sugar biosynthesis; ADP-L-glycero-beta-D-manno-heptose biosynthesis; ADP-L-glycero-beta-D-manno-heptose from D-glycero-beta-D-manno-heptose 7-phosphate: step 1/4. The protein operates within nucleotide-sugar biosynthesis; ADP-L-glycero-beta-D-manno-heptose biosynthesis; ADP-L-glycero-beta-D-manno-heptose from D-glycero-beta-D-manno-heptose 7-phosphate: step 3/4. Functionally, catalyzes the phosphorylation of D-glycero-D-manno-heptose 7-phosphate at the C-1 position to selectively form D-glycero-beta-D-manno-heptose-1,7-bisphosphate. Its function is as follows. Catalyzes the ADP transfer from ATP to D-glycero-beta-D-manno-heptose 1-phosphate, yielding ADP-D-glycero-beta-D-manno-heptose. The sequence is that of Bifunctional protein HldE from Coxiella burnetii (strain Dugway 5J108-111).